The following is a 260-amino-acid chain: Thiazole synthase (260 aa).

Catalysis depends on K96, which acts as the Schiff-base intermediate with DXP. Residues G157, 183 to 184, and 205 to 206 contribute to the 1-deoxy-D-xylulose 5-phosphate site; these read AG and AS.

The protein belongs to the ThiG family. Homotetramer. Forms heterodimers with either ThiH or ThiS.

It localises to the cytoplasm. It carries out the reaction [ThiS sulfur-carrier protein]-C-terminal-Gly-aminoethanethioate + 2-iminoacetate + 1-deoxy-D-xylulose 5-phosphate = [ThiS sulfur-carrier protein]-C-terminal Gly-Gly + 2-[(2R,5Z)-2-carboxy-4-methylthiazol-5(2H)-ylidene]ethyl phosphate + 2 H2O + H(+). The protein operates within cofactor biosynthesis; thiamine diphosphate biosynthesis. Its function is as follows. Catalyzes the rearrangement of 1-deoxy-D-xylulose 5-phosphate (DXP) to produce the thiazole phosphate moiety of thiamine. Sulfur is provided by the thiocarboxylate moiety of the carrier protein ThiS. In vitro, sulfur can be provided by H(2)S. This Corynebacterium glutamicum (strain ATCC 13032 / DSM 20300 / JCM 1318 / BCRC 11384 / CCUG 27702 / LMG 3730 / NBRC 12168 / NCIMB 10025 / NRRL B-2784 / 534) protein is Thiazole synthase.